The primary structure comprises 219 residues: Chalcone--flavanone isomerase (219 aa).

Residues T50, N115, and S192 each contribute to the substrate site.

This sequence belongs to the chalcone isomerase family.

It carries out the reaction a chalcone = a flavanone.. The protein operates within secondary metabolite biosynthesis; flavonoid biosynthesis. In terms of biological role, catalyzes the intramolecular cyclization of bicyclic chalcones into tricyclic (S)-flavanones. Responsible for the isomerization of 4,2',4',6'-tetrahydroxychalcone (also termed chalcone) into naringenin. The sequence is that of Chalcone--flavanone isomerase (CHI) from Pyrus communis (Pear).